The primary structure comprises 76 residues: Alpha/kappa-conotoxin-like pl14.1 (76 aa).

The signal sequence occupies residues 1 to 27 (MPSVRSVTCCCLLWMMLSVQLVTPGSP). Positions 28–39 (ATAQLSGQRTAR) are excised as a propeptide. Cystine bridges form between Cys-46-Cys-61 and Cys-50-Cys-63. Asparagine amide is present on Asn-64. A propeptide spanning residues 65 to 76 (GKRDVVSSSMAV) is cleaved from the precursor.

The protein belongs to the conotoxin J superfamily. In terms of tissue distribution, expressed by the venom duct.

It is found in the secreted. Its function is as follows. Highly inhibits both nicotinic acetylcholine receptors (neuronal (alpha-3/beta-4) and muscular (alpha-1/beta-1/epsilon/delta) subtypes) and the voltage-gated potassium channel Kv1.6/KCNA6 subtype. This is Alpha/kappa-conotoxin-like pl14.1 from Conus planorbis (Planorbis cone).